Consider the following 359-residue polypeptide: Heat-inducible transcription repressor HrcA (359 aa).

This sequence belongs to the HrcA family.

Functionally, negative regulator of class I heat shock genes (grpE-dnaK-dnaJ and groELS operons). Prevents heat-shock induction of these operons. The sequence is that of Heat-inducible transcription repressor HrcA from Roseiflexus castenholzii (strain DSM 13941 / HLO8).